We begin with the raw amino-acid sequence, 1871 residues long: Callose synthase 4 (1871 aa).

Topologically, residues 1–491 (MNQPNRGQIL…FWHLFRSFDR (491 aa)) are cytoplasmic. A helical membrane pass occupies residues 492–512 (MWSFYILSLQAMIIIAWNETS). The Extracellular portion of the chain corresponds to 513–521 (ESGGAVFHK). The helical transmembrane segment at 522–542 (VLSVFITAAKLNLFQAFLDIA) threads the bilayer. Topologically, residues 543–558 (LSWKARHSMSTHVRQR) are cytoplasmic. A helical membrane pass occupies residues 559–579 (YIFKAVAAAVWVLLMPLTYAY). At 580–583 (SHTS) the chain is on the extracellular side. The helical transmembrane segment at 584–604 (IFIVAILIYLSPNMLPEMLLL) threads the bilayer. Residues 605–640 (IPSIRRTLEKSDFRPVKLIMWWSQPELYIGRGMHES) lie on the Cytoplasmic side of the membrane. The helical transmembrane segment at 641–661 (AWSIYKYMMFWIVLLTSKLAF) threads the bilayer. The Extracellular segment spans residues 662-701 (SYYVEQIKPLMGPTKEIMSVPMPGYWLPEFFPHVKNNRGV). A helical membrane pass occupies residues 702 to 724 (VITLWSPVILVYFMDTQIWYAIV). At 725 to 1441 (STLVGGLYGA…FDFFRMLSCY (717 aa)) the chain is on the cytoplasmic side. The chain crosses the membrane as a helical span at residues 1442–1462 (FTTVGFYFCSMLTVLTVYVFL). The Extracellular segment spans residues 1463–1485 (YGRLYLVLSGVEKELGNKPMMME). A helical membrane pass occupies residues 1486–1506 (IILASQSFVQIVFLMAMPMIM). The Cytoplasmic portion of the chain corresponds to 1507-1516 (EIGLERGFYD). Residues 1517 to 1537 (ALFDFVLMQLQLASVFFTFQL) traverse the membrane as a helical segment. The Extracellular portion of the chain corresponds to 1538–1580 (GTKFHYYCKTLLHGGAEYRGTGRGFVVFHAKFAENYRFYSRSH). 2 helical membrane passes run 1581–1601 (FVKA…GPTY) and 1602–1622 (IGLF…APFL). Topologically, residues 1623-1675 (FNPSGFEWHEIVEDWADWKKWIEYDNGGIGVPPEKSWESWWEKDIEHLQHSGK) are extracellular. A helical membrane pass occupies residues 1676–1696 (WGIVVEIFFALRFFIFQYGLV). Residues 1697-1708 (YQLSAFKNKYSS) lie on the Cytoplasmic side of the membrane. The chain crosses the membrane as a helical span at residues 1709–1729 (LWVFGASWLLILILLLTVTVL). Topologically, residues 1730–1741 (DYARRRLGTEFQ) are extracellular. A helical membrane pass occupies residues 1742-1762 (LLFRIIKVSLFLAFMAIFITL). Topologically, residues 1763–1772 (MTCRLILPQD) are cytoplasmic. Residues 1773 to 1793 (VFLCMLALIPTGWGLLLIAQS) traverse the membrane as a helical segment. The Extracellular segment spans residues 1794–1815 (CKPLIQQPGIWSWVMTLAWVYD). Residues 1816–1836 (LVMGSLLFIPIAFMAWFPFIS) traverse the membrane as a helical segment. Over 1837-1871 (EFQTRMLFNQAFSRGLHISRILSGQRKHRSSKNKD) the chain is Cytoplasmic.

Belongs to the glycosyltransferase 48 family.

The protein resides in the cell membrane. It catalyses the reaction [(1-&gt;3)-beta-D-glucosyl](n) + UDP-alpha-D-glucose = [(1-&gt;3)-beta-D-glucosyl](n+1) + UDP + H(+). Functionally, involved in callose synthesis at the forming cell plate during cytokinesis. During plant growth and development, callose is found as a transitory component of the cell plate in dividing cells, is a major component of pollen mother cell walls and pollen tubes, and is found as a structural component of plasmodesmatal canals. The chain is Callose synthase 4 (CALS4) from Arabidopsis thaliana (Mouse-ear cress).